Here is a 190-residue protein sequence, read N- to C-terminus: Selenoprotein S (190 aa).

Residues 28 to 48 (SLLATYGWYIVFCCILLYVVF) traverse the membrane as a helical segment. The interval 78–90 (RQEALAAARLKMQ) is VCP/p97-interacting motif (VIM). A compositionally biased stretch (basic and acidic residues) spans 115–138 (KIERWDSVQEGRSYRGDARKRQEE). Positions 115 to 190 (KIERWDSVQE…RRGPSSGGUG (76 aa)) are disordered. At S140 the chain carries Phosphoserine. A compositionally biased stretch (gly residues) spans 160-174 (RGGGYNPLSGEGGGA). Residue U189 is a non-standard amino acid, selenocysteine.

Belongs to the selenoprotein S family. As to quaternary structure, interacts with DERL1 and (via VIM motif) with VCP, suggesting that it forms a membrane complex with DERL1 that serves as a receptor for VCP. Also interacts with DERL2, DERL3 and SELENOK. The SELENOK-SELENOS complex interacts with VCP. Post-translationally, truncated SELENOS proteins produced by failed UGA/Sec decoding are ubiquitinated by the CRL2(KLHDC2) and CRL2(KLHDC3) complexes, which recognizes the glycine (Gly) at the C-terminus of truncated SELENOS proteins. Truncated SELENOS proteins produced by failed UGA/Sec decoding are also ubiquitinated by the CRL5(KLHDC1) complex. Ubiquitously expressed. Highest expression in liver and lung, with lower levels detected in spleen, kidney, brain, lymph nodes, small intestine, stomach and heart. Very low expression detected in longissimus dorsi.

The protein localises to the cytoplasm. It is found in the endoplasmic reticulum membrane. Its function is as follows. Involved in the degradation process of misfolded endoplasmic reticulum (ER) luminal proteins. Participates in the transfer of misfolded proteins from the ER to the cytosol, where they are destroyed by the proteasome in a ubiquitin-dependent manner. Probably acts by serving as a linker between DERL1, which mediates the retrotranslocation of misfolded proteins into the cytosol, and the ATPase complex VCP, which mediates the translocation and ubiquitination. This is Selenoprotein S from Sus scrofa (Pig).